We begin with the raw amino-acid sequence, 363 residues long: tRNA(Met) cytidine acetate ligase (363 aa).

Residues 7–20 (IAEY…HKYL), G96, N152, and R175 each bind ATP.

Belongs to the TmcAL family.

The protein localises to the cytoplasm. The enzyme catalyses cytidine(34) in elongator tRNA(Met) + acetate + ATP = N(4)-acetylcytidine(34) in elongator tRNA(Met) + AMP + diphosphate. In terms of biological role, catalyzes the formation of N(4)-acetylcytidine (ac(4)C) at the wobble position of elongator tRNA(Met), using acetate and ATP as substrates. First activates an acetate ion to form acetyladenylate (Ac-AMP) and then transfers the acetyl group to tRNA to form ac(4)C34. This chain is tRNA(Met) cytidine acetate ligase, found in Streptococcus suis (strain 98HAH33).